Reading from the N-terminus, the 920-residue chain is 2-oxoadipate dehydrogenase complex component E1 (920 aa).

An N6-succinyllysine mark is found at K183 and K188. A disordered region spans residues 299 to 318 (GKTRGRQQSQEDGDYSPNGS). N6-succinyllysine occurs at positions 800 and 818.

Belongs to the alpha-ketoglutarate dehydrogenase family. In terms of assembly, the 2-oxoadipate dehydrogenase complex is composed of OADH (2-oxoadipate dehydrogenase; E1a), DLST (dihydrolipoamide succinyltransferase; E2) and DLD (dihydrolipoamide dehydrogenase; E3). E1a functional unit is a dimer. Thiamine diphosphate is required as a cofactor.

The protein localises to the mitochondrion. It catalyses the reaction N(6)-[(R)-lipoyl]-L-lysyl-[protein] + 2-oxoadipate + H(+) = N(6)-[(R)-S(8)-glutaryldihydrolipoyl]-L-lysyl-[protein] + CO2. It participates in amino-acid degradation. In terms of biological role, 2-oxoadipate dehydrogenase (E1a) component of the 2-oxoadipate dehydrogenase complex (OADHC). Participates in the first step, rate limiting for the overall conversion of 2-oxoadipate (alpha-ketoadipate) to glutaryl-CoA and CO(2) catalyzed by the whole OADHC. Catalyzes the irreversible decarboxylation of 2-oxoadipate via the thiamine diphosphate (ThDP) cofactor and subsequent transfer of the decarboxylated acyl intermediate on an oxidized dihydrolipoyl group that is covalently amidated to the E2 enzyme (dihydrolipoyllysine-residue succinyltransferase or DLST). Can catalyze the decarboxylation of 2-oxoglutarate in vitro, but at a much lower rate than 2-oxoadipate. Responsible for the last step of L-lysine, L-hydroxylysine and L-tryptophan catabolism with the common product being 2-oxoadipate. This is 2-oxoadipate dehydrogenase complex component E1 (Dhtkd1) from Rattus norvegicus (Rat).